The primary structure comprises 489 residues: WPP domain-interacting protein 1 (489 aa).

The tract at residues 49-73 (SNSVELGKPMSFDSPGDGGGAYSPV) is disordered. 3 consecutive short sequence motifs (nuclear localization signal) follow at residues 80 to 81 (RK), 83 to 84 (RR), and 104 to 105 (KR). The segment at 195 to 264 (PMISSGQGGN…DDAGGEGGES (70 aa)) is disordered. The segment covering 215 to 224 (GESVDFEKEN) has biased composition (basic and acidic residues). Residues 323-446 (EIVTLVNNVE…QDLQNDCIEI (124 aa)) are a coiled coil. The KASH domain maps to 459–489 (SYVLIQLVLLSTVVLLLLSQLLPEPDTVVPT). A helical transmembrane segment spans residues 460–480 (YVLIQLVLLSTVVLLLLSQLL).

As to quaternary structure, homodimer and heterodimer with WIP2. Component of Ran complexes at least composed of WIT1 or WIT2, RANGAP1 or RANGAP2, and WIP1 or WIP2 or WIP3. Interacts with RANGAP1, RANGAP2, WPP1/MAF1, and WPP2/MAF2. Interacts with SUN1 and SUN2. Interacts with KIN1. Core component of the LINC complex which is composed of inner nuclear membrane SUN domain-containing proteins coupled to outer nuclear membrane WIP and WIT proteins. The LINC complex also involves nucleoskeletal proteins CRWN/LINC and possibly KAKU4 and the cytoskeletal myosin KAKU1. Interacts with WIT1 and SUN2. Interacts with WIT2. Interacts with SUN3. As to expression, expressed in seedlings, roots, stems, leaves, and flowers.

The protein resides in the nucleus envelope. Its subcellular location is the nucleus membrane. Its function is as follows. Mediates and enhances the nuclear envelope docking of RANGAP proteins mediated by WIT1 and WIT2 in the undifferentiated cells of root tips. As component of the SUN-WIP-WIT2-KAKU1 complex, mediates the transfer of cytoplasmic forces to the nuclear envelope (NE), leading to nuclear shape changes. This Arabidopsis thaliana (Mouse-ear cress) protein is WPP domain-interacting protein 1 (WIP1).